The following is a 131-amino-acid chain: Capsid protein (131 aa).

Ca(2+) contacts are provided by Gln-2 and Tyr-131.

It belongs to the Leviviricetes capsid protein family. As to quaternary structure, homodimer. The capsid proteins form dimers that assemble by group of 5. Twelve such pentamers are linked together with free dimers. The homodimers binds to the viral RNA via an operator hairpin, but also to many other RNA sequences in the viral genome; this interaction probably shifts the virus from the replicative to the assembly phase and ensures specific encapsidation of the viral genome.

Its subcellular location is the virion. Functionally, capsid protein self-assembles to form an icosahedral capsid with a T=3 symmetry, about 26 nm in diameter, and consisting of 89 capsid proteins dimers (178 capsid proteins). Involved in viral genome encapsidation through the interaction between a capsid protein dimer and the multiple packaging signals present in the RNA genome. The capsid also contains 1 copy of the A2 maturation protein. Acts as a translational repressor of viral replicase synthesis late in infection. This latter function is the result of capsid protein interaction with an RNA hairpin which contains the replicase ribosome-binding site. This chain is Capsid protein, found in Pseudomonas phage PRR1 (Bacteriophage PRR1).